We begin with the raw amino-acid sequence, 152 residues long: Transcriptional regulator MraZ (152 aa).

SpoVT-AbrB domains are found at residues 5-52 and 81-124; these read LNPI…THPQ and ATEV…GKSQ.

Belongs to the MraZ family. In terms of assembly, forms oligomers.

Its subcellular location is the cytoplasm. The protein resides in the nucleoid. This Coxiella burnetii (strain Dugway 5J108-111) protein is Transcriptional regulator MraZ.